We begin with the raw amino-acid sequence, 229 residues long: MTKKKALNPLPYLASIVFLPWGISLSFNKSMEPWVTNWWNTSQSETFLNDIQEKNILEGFIKLEELFLLDEMIKEYPETHIQKLRIGIHKETIQLVRMHNQDHIHIILHFSTNITCFAILSAYSILGNEELITLNSWVQEFLYNLSDTIKAFSILLLTDLCIGFHSPHAWELMIGSFYKDFGFVQNEKIISGLVSTFPVILDTILKYWIFHYLNRVSPSLVVIYHSLNE.

3 consecutive transmembrane segments (helical) span residues 7 to 27 (LNPLPYLASIVFLPWGISLSF), 106 to 126 (IILHFSTNITCFAILSAYSIL), and 189 to 209 (IISGLVSTFPVILDTILKYWI).

Belongs to the CemA family.

It localises to the plastid. The protein resides in the chloroplast inner membrane. It carries out the reaction K(+)(in) + H(+)(out) = K(+)(out) + H(+)(in). Functionally, contributes to K(+)/H(+) antiport activity by supporting proton efflux to control proton extrusion and homeostasis in chloroplasts in a light-dependent manner to modulate photosynthesis. Prevents excessive induction of non-photochemical quenching (NPQ) under continuous-light conditions. Indirectly promotes efficient inorganic carbon uptake into chloroplasts. The sequence is that of Potassium/proton antiporter CemA from Nymphaea alba (White water-lily).